Reading from the N-terminus, the 65-residue chain is Photosystem II reaction center protein J (65 aa).

The chain crosses the membrane as a helical span at residues 35 to 55; sequence LWLVATAGGTAVIFVLGIFFY.

This sequence belongs to the PsbJ family. As to quaternary structure, PSII is composed of 1 copy each of membrane proteins PsbA, PsbB, PsbC, PsbD, PsbE, PsbF, PsbH, PsbI, PsbJ, PsbK, PsbL, PsbM, PsbT, PsbX, PsbY, Psb30/Ycf12, peripheral proteins PsbO, CyanoQ (PsbQ), PsbU, PsbV and a large number of cofactors. It forms dimeric complexes.

Its subcellular location is the cellular thylakoid membrane. Its function is as follows. One of the components of the core complex of photosystem II (PSII). PSII is a light-driven water:plastoquinone oxidoreductase that uses light energy to abstract electrons from H(2)O, generating O(2) and a proton gradient subsequently used for ATP formation. It consists of a core antenna complex that captures photons, and an electron transfer chain that converts photonic excitation into a charge separation. The sequence is that of Photosystem II reaction center protein J from Prochlorococcus marinus (strain NATL1A).